The primary structure comprises 74 residues: Sec-independent protein translocase protein TatA (74 aa).

A helical membrane pass occupies residues 1–21 (MGTFSIWHWLIVLLVVVVVFG). The interval 50–74 (TAPAGQVANQSTADQTIDVQTKPKG) is disordered. Residues 56 to 68 (VANQSTADQTIDV) show a composition bias toward polar residues.

This sequence belongs to the TatA/E family. In terms of assembly, the Tat system comprises two distinct complexes: a TatABC complex, containing multiple copies of TatA, TatB and TatC subunits, and a separate TatA complex, containing only TatA subunits. Substrates initially bind to the TatABC complex, which probably triggers association of the separate TatA complex to form the active translocon.

Its subcellular location is the cell inner membrane. In terms of biological role, part of the twin-arginine translocation (Tat) system that transports large folded proteins containing a characteristic twin-arginine motif in their signal peptide across membranes. TatA could form the protein-conducting channel of the Tat system. The polypeptide is Sec-independent protein translocase protein TatA (Verminephrobacter eiseniae (strain EF01-2)).